Here is a 447-residue protein sequence, read N- to C-terminus: Probable glycine dehydrogenase (decarboxylating) subunit 1 (447 aa).

This sequence belongs to the GcvP family. N-terminal subunit subfamily. As to quaternary structure, the glycine cleavage system is composed of four proteins: P, T, L and H. In this organism, the P 'protein' is a heterodimer of two subunits.

It catalyses the reaction N(6)-[(R)-lipoyl]-L-lysyl-[glycine-cleavage complex H protein] + glycine + H(+) = N(6)-[(R)-S(8)-aminomethyldihydrolipoyl]-L-lysyl-[glycine-cleavage complex H protein] + CO2. The glycine cleavage system catalyzes the degradation of glycine. The P protein binds the alpha-amino group of glycine through its pyridoxal phosphate cofactor; CO(2) is released and the remaining methylamine moiety is then transferred to the lipoamide cofactor of the H protein. This Halalkalibacterium halodurans (strain ATCC BAA-125 / DSM 18197 / FERM 7344 / JCM 9153 / C-125) (Bacillus halodurans) protein is Probable glycine dehydrogenase (decarboxylating) subunit 1.